The chain runs to 356 residues: Fructose import permease protein FruF (356 aa).

Transmembrane regions (helical) follow at residues 25 to 45 (IVAFILLVIICTIFQHDFLAL), 77 to 97 (LVISTAGIDLSVGSVMAVAGA), 113 to 133 (ILIALAVGLAIGCVNGALVSF), 180 to 200 (FILGIPANFVIAVIIVILVGL), 231 to 251 (ILFLVYAISGFLAAIAGLFAT), 268 to 290 (MYAILAVVIGGTSLLGGKFSLAG), and 308 to 328 (LGVNAEATPAFFAVVVIVICV).

Belongs to the binding-protein-dependent transport system permease family. The complex is composed of an ATP-binding protein (FruK), two transmembrane proteins (FruF and FruG) and a solute-binding protein (FruE).

The protein resides in the cell membrane. Its function is as follows. Part of the high-affinity ABC transporter complex FruEKFG involved in fructose uptake. Can also transport ribose and xylose, with lower affinity. Probably responsible for the translocation of the substrate across the membrane. This chain is Fructose import permease protein FruF, found in Bifidobacterium longum (strain NCC 2705).